The primary structure comprises 493 residues: MTELNKLTVADSVKGLKNKDFTSKELVNAHIKQIEKHKNLNAYVTETFDLALKQAEAADQNYAQNQPQTLEGIPFAAKDLFCTKGIRTTACSNILKNFIPNYESSVTQNIFDKGGVMLGKTNMDEFAMGSANITSCFGNVISPWKANDDNADLVPGGSSGGSAAAVSGFMASAALGSDTGGSVRQPASFTGLVGFKPTYGRCSRYGMVSFASSLDQAGIFTRSVLDSSIMLEAMMGFDEKDSTSIKAEVPELQSAIGSSMKNMKIGVPLSLGEGGIIEPDIMKMWQDTIELLKNAGAEIVDITLPHAKYGVAVYYVIAPAEASSNLSRYDGVRYGLRVERENMTLDEMYEMTRSAGFGEEVKRRIMIGTYVLSSSCMDAYYLKAQKVRRLVANDFNNAFAKVDAILLPAAPTEAFKIGEKQNDPTIMYLNDLFTIPASLAGLPCASVPAGLSARGLPLGMQIIGKQLDEYNVLKVASTIESGVKHIKFEPKGF.

Residues K78 and S158 each act as charge relay system in the active site. The active-site Acyl-ester intermediate is S182.

It belongs to the amidase family. GatA subfamily. In terms of assembly, heterotrimer of A, B and C subunits.

It catalyses the reaction L-glutamyl-tRNA(Gln) + L-glutamine + ATP + H2O = L-glutaminyl-tRNA(Gln) + L-glutamate + ADP + phosphate + H(+). In terms of biological role, allows the formation of correctly charged Gln-tRNA(Gln) through the transamidation of misacylated Glu-tRNA(Gln) in organisms which lack glutaminyl-tRNA synthetase. The reaction takes place in the presence of glutamine and ATP through an activated gamma-phospho-Glu-tRNA(Gln). This is Glutamyl-tRNA(Gln) amidotransferase subunit A from Rickettsia felis (strain ATCC VR-1525 / URRWXCal2) (Rickettsia azadi).